Reading from the N-terminus, the 327-residue chain is Putative ABC transporter ATP-binding protein MM_0887 (327 aa).

Residues 1–44 (MSKSTPLKSSIIRADLPEQAEGRTGPETGKDPEKTGNSEGKTDT) form a disordered region. A compositionally biased stretch (basic and acidic residues) spans 28-44 (TGKDPEKTGNSEGKTDT). Positions 47–282 (IEIKDLCHRY…PALLRKAHLR (236 aa)) constitute an ABC transporter domain. 81–88 (GANGAGKS) is an ATP binding site.

The protein belongs to the ABC transporter superfamily.

The protein resides in the cell membrane. Probably part of an ABC transporter complex. Responsible for energy coupling to the transport system. This is Putative ABC transporter ATP-binding protein MM_0887 from Methanosarcina mazei (strain ATCC BAA-159 / DSM 3647 / Goe1 / Go1 / JCM 11833 / OCM 88) (Methanosarcina frisia).